The following is a 261-amino-acid chain: Putative hydro-lyase SAR11_0660 (261 aa).

This sequence belongs to the D-glutamate cyclase family.

The protein is Putative hydro-lyase SAR11_0660 of Pelagibacter ubique (strain HTCC1062).